A 65-amino-acid polypeptide reads, in one-letter code: Large ribosomal subunit protein bL35 (65 aa).

It belongs to the bacterial ribosomal protein bL35 family.

The protein is Large ribosomal subunit protein bL35 of Aeromonas hydrophila subsp. hydrophila (strain ATCC 7966 / DSM 30187 / BCRC 13018 / CCUG 14551 / JCM 1027 / KCTC 2358 / NCIMB 9240 / NCTC 8049).